The primary structure comprises 1217 residues: MQMEDKGEALNPDAMYSLLKEIDQEISHTDNISIDQLPEEDTLDNEKKIDASENVIENTEEEALQLGDESANTTTEIKETSCTEDHDTVENTEDVISMAEGLDKAPLETAWIKHNYQQTKPVVSKRLISNDGSDTSVEDINASTRIPSYTSEEITGLELKDKMVTDVGERLSHFLDQKYAENPNLPALKGMLSMADEKAMEDDPKKDKPLVFTIEPTKPLFPSKEVSSTMIQVEIHTPDEDDVDGAAADTKEATNLLLDSKIPVTPNVCINRFVNNNGETRVSSGSSTEDAQELNTHRFQDRYHLLSGAQAVPQLPQLPALTLQDYKSSSVQSVNASRIFSVATTNDNYQSAKEYDLSSTVGCEELSDDASVKDLEIPEPNELPCFPTFQLDSTSMKTSSSMETVQHDKAKFNSDVNIADDTMEQIEQEEAELISNPERSGSPTNDNMSQHSQNRQLLGVSEVSQAQQAPEHHVEMSVEFQDEGRRDITSSFSRESDRIELPPLPPMNGLSTMFDQDLFNDHETSHESIDLTSSSHKENYLSIWHSQKTGGSFISPALSTNSQFSTQSRTSSVPTNHSGSSFKFKSRIISNSHVFKQEAFRQFSDEYVLSTQDDSKLDPLRRNTIMSKRIQQELKTQAKMYPFANKFALDESSEPSIHNESIITGDISRTSDKAVDTTNILSHKNLTLLPPQSTETVFSSFLDNFDKDDFEEKLAEESRLNSKKNLQTTWGHFRDVSSGNVDIKATQQQIAEVLHNQNEDVVQVGSHIQDVKVLLGNEIEGYDVQKSVSDLSVETTKKSPIKHVGSPFKVKARSETPPQSPVVYERDTTEVNEGLQRAPTTSLASVYLENSLQEFESSELQDHGKLYLKLKSINSLRLQQIKRHNAKYCIEFDNGKEVIETPWESIPEDGPIKMSQEFEVNMESNNVTLFMTMKIRYTSPQNQLTEVVEKIPIKKRFAFGKTKYRLEKRFVTKKLKYDDWDFKFAKDGSFARCQVNVNKNMLKQIKYKTNELHFEFLNEWEREFDEKIAQTYKEDELWKLPRKNPSKVCSLTVDVMYLPRTSSMERFPKNLKAVQKCCEKYLEQQRVNNEGFLWQEGGDVEGMLKRRYMILKGTELIAHDEVTRKPQTLLNLLNVVDIYSDGKTATGKQMRNFTDMVLFSDCFKLLFANDEVINFNADSNLLKQQWVEILTSVVELNKFHQPWIKRVFENEQYNITF.

The tract at residues 430–514 (EAELISNPER…PPMNGLSTMF (85 aa)) is disordered. The segment covering 437–468 (PERSGSPTNDNMSQHSQNRQLLGVSEVSQAQQ) has biased composition (polar residues). Residues 470 to 500 (PEHHVEMSVEFQDEGRRDITSSFSRESDRIE) are compositionally biased toward basic and acidic residues. Positions 1086–1195 (RVNNEGFLWQ…WVEILTSVVE (110 aa)) constitute a PH domain.

It belongs to the BUD4 family.

The protein localises to the bud neck. Required for selection of future bud sites. Cooperates with other bud site selection proteins to recognize a spatial landmark during mitosis and they subsequently become a landmark for downstream polarity establishment factors that coordinate budding and cytokinesis. Involved in the septin organization at the bud neck. In Kluyveromyces lactis (strain ATCC 8585 / CBS 2359 / DSM 70799 / NBRC 1267 / NRRL Y-1140 / WM37) (Yeast), this protein is Bud site selection protein 4 (BUD4).